A 301-amino-acid chain; its full sequence is tRNA pseudouridine synthase B (301 aa).

Aspartate 45 functions as the Nucleophile in the catalytic mechanism.

The protein belongs to the pseudouridine synthase TruB family. Type 1 subfamily.

The catalysed reaction is uridine(55) in tRNA = pseudouridine(55) in tRNA. Its function is as follows. Responsible for synthesis of pseudouridine from uracil-55 in the psi GC loop of transfer RNAs. The polypeptide is tRNA pseudouridine synthase B (Streptomyces coelicolor (strain ATCC BAA-471 / A3(2) / M145)).